The sequence spans 490 residues: Protein nucleotidyltransferase YdiU (490 aa).

Residues Gly-89, Gly-91, Arg-92, Lys-112, Asp-124, Gly-125, Arg-175, and Arg-182 each coordinate ATP. Asp-251 (proton acceptor) is an active-site residue. Asn-252 and Asp-261 together coordinate Mg(2+). Asp-261 provides a ligand contact to ATP.

The protein belongs to the SELO family. The cofactor is Mg(2+). Mn(2+) serves as cofactor.

It catalyses the reaction L-seryl-[protein] + ATP = 3-O-(5'-adenylyl)-L-seryl-[protein] + diphosphate. It carries out the reaction L-threonyl-[protein] + ATP = 3-O-(5'-adenylyl)-L-threonyl-[protein] + diphosphate. The enzyme catalyses L-tyrosyl-[protein] + ATP = O-(5'-adenylyl)-L-tyrosyl-[protein] + diphosphate. The catalysed reaction is L-histidyl-[protein] + UTP = N(tele)-(5'-uridylyl)-L-histidyl-[protein] + diphosphate. It catalyses the reaction L-seryl-[protein] + UTP = O-(5'-uridylyl)-L-seryl-[protein] + diphosphate. It carries out the reaction L-tyrosyl-[protein] + UTP = O-(5'-uridylyl)-L-tyrosyl-[protein] + diphosphate. In terms of biological role, nucleotidyltransferase involved in the post-translational modification of proteins. It can catalyze the addition of adenosine monophosphate (AMP) or uridine monophosphate (UMP) to a protein, resulting in modifications known as AMPylation and UMPylation. The protein is Protein nucleotidyltransferase YdiU of Vibrio vulnificus (strain CMCP6).